Consider the following 125-residue polypeptide: MAPKVRAAKKGEKRVGKAKSGTAETAKRRRGKRKESYAIYIYKVLKQVHPDTGISSKAMGIMNSFVNDIFERIAVESSRLSLYNKKATISSREIQTAIRLLLPGELAKHAVSEGTKAVTKYTSSK.

The interval 1–32 is disordered; it reads MAPKVRAAKKGEKRVGKAKSGTAETAKRRRGK. S112 is a glycosylation site (O-linked (GlcNAc) serine). Residue K120 forms a Glycyl lysine isopeptide (Lys-Gly) (interchain with G-Cter in ubiquitin) linkage.

The protein belongs to the histone H2B family. The nucleosome is a histone octamer containing two molecules each of H2A, H2B, H3 and H4 assembled in one H3-H4 heterotetramer and two H2A-H2B heterodimers. The octamer wraps approximately 147 bp of DNA. Post-translationally, monoubiquitination of Lys-120 gives a specific tag for epigenetic transcriptional activation and is also prerequisite for histone H3 'Lys-4' and 'Lys-79' methylation. In terms of processing, glcNAcylation at Ser-112 promotes monoubiquitination of Lys-120. It fluctuates in response to extracellular glucose, and associates with transcribed genes.

The protein resides in the nucleus. Its subcellular location is the chromosome. Its function is as follows. Core component of nucleosome. Nucleosomes wrap and compact DNA into chromatin, limiting DNA accessibility to the cellular machineries which require DNA as a template. Histones thereby play a central role in transcription regulation, DNA repair, DNA replication and chromosomal stability. DNA accessibility is regulated via a complex set of post-translational modifications of histones, also called histone code, and nucleosome remodeling. The sequence is that of Histone H2B from Acropora formosa (Staghorn coral).